Consider the following 509-residue polypeptide: Group 3 secretory phospholipase A2 (509 aa).

The signal sequence occupies residues 1 to 19 (MGVQAGLFGMLGFLGVALG). Residues 123–149 (ESPAGARKKRAAGQSGVPGGGHQREKR) form a disordered region. Residues 150–291 (GWTMPGTLWC…SWSSRATSPT (142 aa)) form a phospholipase A2-like region. Residues tryptophan 158, glycine 160, and glycine 162 each coordinate Ca(2+). 4 disulfide bridges follow: cysteine 159–cysteine 181, cysteine 180–cysteine 220, cysteine 187–cysteine 213, and cysteine 211–cysteine 244. Residue asparagine 167 is glycosylated (N-linked (GlcNAc...) asparagine). Histidine 184 is an active-site residue. Aspartate 185 is a Ca(2+) binding site. Aspartate 214 is an active-site residue. Asparagine 280 carries an N-linked (GlcNAc...) asparagine glycan. The interval 283–354 (WSSRATSPTP…LQGPQGGLKP (72 aa)) is disordered. A compositionally biased stretch (low complexity) spans 284–296 (SSRATSPTPSSRS). Positions 302 to 322 (PRQKQHLRKGPPHQKGSKRPS) are enriched in basic residues. N-linked (GlcNAc...) asparagine glycans are attached at residues asparagine 325, asparagine 396, and asparagine 439. Residues 458-482 (QQRRHQLQDKGTDERQPWPSEPLRG) form a disordered region. The span at 463–473 (QLQDKGTDERQ) shows a compositional bias: basic and acidic residues.

Belongs to the phospholipase A2 family. Requires Ca(2+) as cofactor. Post-translationally, N-glycosylation does not affect the catalytic activity, but is required for proper secretion. A nonglycosylated form is observed in several cell types. In terms of processing, in several cell types, the N- and C-termini are cleaved off. As to expression, expressed in kidney, heart, liver, and skeletal muscle. Also present in placenta and peripheral blood leukocytes. Not detected in colon, thymus, spleen and small intestine. In lung, expressed in bronchial epithelial cells and alveolar macrophages, but scarcely detected in alveolar epithelium, arterial walls and interstitial fibroblasts (at protein level). In joints of osteoarthritis and rheumatoid arthritis, expressed in endothelial cells (at protein level). In normal heart, detected in some vessels. In myocardial tissues with acute infarction, expressed in vascular endothelial cells adjacent to cardiomyocytes and those in lesions with granulation. Expression in cardiomyocytes is scarce (at protein level). In uterus, breast and colon cancers, detected in tumor cells and neighboring microvascular endothelium, but not in normal glandular tissues (at protein level). Expressed in dermal resting mast cells (at protein level) and pulmonary mast cells. Expressed in neuronal fibers (at protein level). Highly expressed in dorsal root ganglia neurons (at protein level). Expressed in Purkinje cells in cerebellum (at protein level). In stomach is preferentially expressed in neuronal fibers and in microvascular endothelium. Sparsely expressed in normal aorta (at protein level). Highly expressed in macrophages and smooth muscle cells in aorta with atheroma.

The protein resides in the secreted. It localises to the cell membrane. Its subcellular location is the cytoplasm. The protein localises to the cytoskeleton. It is found in the microtubule organizing center. The protein resides in the centrosome. It localises to the centriole. Its subcellular location is the recycling endosome. The enzyme catalyses a 1,2-diacyl-sn-glycero-3-phosphocholine + H2O = a 1-acyl-sn-glycero-3-phosphocholine + a fatty acid + H(+). It carries out the reaction 1-hexadecanoyl-2-(9Z,12Z-octadecadienoyl)-sn-glycero-3-phosphocholine + H2O = (9Z,12Z)-octadecadienoate + 1-hexadecanoyl-sn-glycero-3-phosphocholine + H(+). It catalyses the reaction 1-hexadecanoyl-2-(5Z,8Z,11Z,14Z-eicosatetraenoyl)-sn-glycero-3-phosphocholine + H2O = 1-hexadecanoyl-sn-glycero-3-phosphocholine + (5Z,8Z,11Z,14Z)-eicosatetraenoate + H(+). The catalysed reaction is 1-hexadecanoyl-2-(9Z,12Z-octadecadienoyl)-sn-glycero-3-phosphoethanolamine + H2O = 1-hexadecanoyl-sn-glycero-3-phosphoethanolamine + (9Z,12Z)-octadecadienoate + H(+). The enzyme catalyses 1-hexadecanoyl-2-(5Z,8Z,11Z,14Z-eicosatetraenoyl)-sn-glycero-3-phosphoethanolamine + H2O = 1-hexadecanoyl-sn-glycero-3-phosphoethanolamine + (5Z,8Z,11Z,14Z)-eicosatetraenoate + H(+). Arachidonic acid release is markedly increased by glypican, a glycosylphosphatidylinositol-anchored heparan sulfate proteoglycan. Functionally, secretory calcium-dependent phospholipase A2 that primarily targets extracellular phospholipids. Hydrolyzes the ester bond of the fatty acyl group attached at sn-2 position of phospholipids without apparent head group selectivity. Contributes to phospholipid remodeling of low-density lipoprotein (LDL) and high-density lipoprotein (HDL) particles. Hydrolyzes LDL phospholipids releasing unsaturated fatty acids that regulate macrophage differentiation toward foam cells. May act in an autocrine and paracrine manner. Secreted by immature mast cells, acts on nearby fibroblasts upstream to PTDGS to synthesize prostaglandin D2 (PGD2), which in turn promotes mast cell maturation and degranulation via PTGDR. Secreted by epididymal epithelium, acts on immature sperm cells within the duct, modulating the degree of unsaturation of the fatty acyl components of phosphatidylcholines required for acrosome assembly and sperm cell motility. Facilitates the replacement of fatty acyl chains in phosphatidylcholines in sperm membranes from omega-6 and omega-9 to omega-3 polyunsaturated fatty acids (PUFAs). Coupled to lipoxygenase pathway, may process omega-6 PUFAs to generate oxygenated lipid mediators in the male reproductive tract. At pericentrosomal preciliary compartment, negatively regulates ciliogenesis likely by regulating endocytotic recycling of ciliary membrane protein. Coupled to cyclooxygenase pathway provides arachidonate to generate prostaglandin E2 (PGE2), a potent immunomodulatory lipid in inflammation and tumorigenesis. At colonic epithelial barrier, preferentially hydrolyzes phospholipids having arachidonate and docosahexaenoate at sn-2 position, contributing to the generation of oxygenated metabolites involved in colonic stem cell homeostasis. Releases C16:0 and C18:0 lysophosphatidylcholine subclasses from neuron plasma membranes and promotes neurite outgrowth and neuron survival. This is Group 3 secretory phospholipase A2 from Homo sapiens (Human).